We begin with the raw amino-acid sequence, 218 residues long: Phosphatidylserine decarboxylase proenzyme (218 aa).

Catalysis depends on Ser187, which acts as the Schiff-base intermediate with substrate; via pyruvic acid. Ser187 carries the pyruvic acid (Ser); by autocatalysis modification.

Belongs to the phosphatidylserine decarboxylase family. PSD-A subfamily. Heterodimer of a large membrane-associated beta subunit and a small pyruvoyl-containing alpha subunit. Pyruvate is required as a cofactor. Post-translationally, is synthesized initially as an inactive proenzyme. Formation of the active enzyme involves a self-maturation process in which the active site pyruvoyl group is generated from an internal serine residue via an autocatalytic post-translational modification. Two non-identical subunits are generated from the proenzyme in this reaction, and the pyruvate is formed at the N-terminus of the alpha chain, which is derived from the carboxyl end of the proenzyme. The post-translation cleavage follows an unusual pathway, termed non-hydrolytic serinolysis, in which the side chain hydroxyl group of the serine supplies its oxygen atom to form the C-terminus of the beta chain, while the remainder of the serine residue undergoes an oxidative deamination to produce ammonia and the pyruvoyl prosthetic group on the alpha chain.

It localises to the cell membrane. It carries out the reaction a 1,2-diacyl-sn-glycero-3-phospho-L-serine + H(+) = a 1,2-diacyl-sn-glycero-3-phosphoethanolamine + CO2. The protein operates within phospholipid metabolism; phosphatidylethanolamine biosynthesis; phosphatidylethanolamine from CDP-diacylglycerol: step 2/2. Functionally, catalyzes the formation of phosphatidylethanolamine (PtdEtn) from phosphatidylserine (PtdSer). In Geobacter sulfurreducens (strain ATCC 51573 / DSM 12127 / PCA), this protein is Phosphatidylserine decarboxylase proenzyme.